A 348-amino-acid chain; its full sequence is DnaJ homolog subfamily B member 5 (348 aa).

The 65-residue stretch at 4 to 68 folds into the J domain; it reads DYYKILGIPS…KKRGLYDQYG (65 aa).

The protein is DnaJ homolog subfamily B member 5 (DNAJB5) of Homo sapiens (Human).